The primary structure comprises 280 residues: 4-diphosphocytidyl-2-C-methyl-D-erythritol kinase (280 aa).

Lys-8 is a catalytic residue. Residue Pro-91–Thr-101 coordinates ATP. Residue Asp-133 is part of the active site.

This sequence belongs to the GHMP kinase family. IspE subfamily.

The catalysed reaction is 4-CDP-2-C-methyl-D-erythritol + ATP = 4-CDP-2-C-methyl-D-erythritol 2-phosphate + ADP + H(+). Its pathway is isoprenoid biosynthesis; isopentenyl diphosphate biosynthesis via DXP pathway; isopentenyl diphosphate from 1-deoxy-D-xylulose 5-phosphate: step 3/6. Catalyzes the phosphorylation of the position 2 hydroxy group of 4-diphosphocytidyl-2C-methyl-D-erythritol. This Clostridium botulinum (strain Eklund 17B / Type B) protein is 4-diphosphocytidyl-2-C-methyl-D-erythritol kinase.